Here is a 476-residue protein sequence, read N- to C-terminus: Cysteine--tRNA ligase (476 aa).

Position 27 (Cys-27) interacts with Zn(2+). Residues 29–39 (PTTYNYIHLGN) carry the 'HIGH' region motif. Zn(2+)-binding residues include Cys-207, His-232, and Glu-236. The short motif at 264–268 (KMSKS) is the 'KMSKS' region element. An ATP-binding site is contributed by Lys-267.

It belongs to the class-I aminoacyl-tRNA synthetase family. In terms of assembly, monomer. It depends on Zn(2+) as a cofactor.

It localises to the cytoplasm. It carries out the reaction tRNA(Cys) + L-cysteine + ATP = L-cysteinyl-tRNA(Cys) + AMP + diphosphate. This is Cysteine--tRNA ligase from Moorella thermoacetica (strain ATCC 39073 / JCM 9320).